The following is a 420-amino-acid chain: Gamma-glutamyl phosphate reductase (420 aa).

It belongs to the gamma-glutamyl phosphate reductase family.

Its subcellular location is the cytoplasm. The enzyme catalyses L-glutamate 5-semialdehyde + phosphate + NADP(+) = L-glutamyl 5-phosphate + NADPH + H(+). It participates in amino-acid biosynthesis; L-proline biosynthesis; L-glutamate 5-semialdehyde from L-glutamate: step 2/2. Catalyzes the NADPH-dependent reduction of L-glutamate 5-phosphate into L-glutamate 5-semialdehyde and phosphate. The product spontaneously undergoes cyclization to form 1-pyrroline-5-carboxylate. In Shewanella amazonensis (strain ATCC BAA-1098 / SB2B), this protein is Gamma-glutamyl phosphate reductase.